Here is a 419-residue protein sequence, read N- to C-terminus: Putative nickel insertion protein (419 aa).

The interval histidine 69 to leucine 90 is disordered. Residues threonine 79–arginine 88 are compositionally biased toward basic residues.

This sequence belongs to the LarC family.

The polypeptide is Putative nickel insertion protein (Rippkaea orientalis (strain PCC 8801 / RF-1) (Cyanothece sp. (strain PCC 8801))).